The sequence spans 62 residues: Frontoxin III (62 aa).

Disulfide bonds link Cys-3/Cys-24, Cys-17/Cys-41, Cys-43/Cys-54, and Cys-55/Cys-60.

In terms of tissue distribution, expressed by the venom gland.

It is found in the secreted. Binds to muscle nicotinic acetylcholine receptor (nAChR) and inhibit acetylcholine from binding to the receptor, thereby impairing neuromuscular transmission. The protein is Frontoxin III of Micrurus frontalis (Coral snake).